A 530-amino-acid chain; its full sequence is Hyccin 2 (530 aa).

Phosphothreonine is present on residues T30 and T306. Phosphoserine is present on residues S321 and S341. The disordered stretch occupies residues 328 to 410 (RREGAEGVNG…DSVVRKQYVQ (83 aa)). A compositionally biased stretch (polar residues) spans 353–373 (SGASLSSQPIGTKPSSSSQRG). A phosphoserine mark is found at S430, S442, S444, and S491. The segment at 498 to 530 (GQAGEGKELLSPGAPLTKQSRSPSFNMQLISQV) is disordered. Residues 514–530 (TKQSRSPSFNMQLISQV) show a composition bias toward polar residues.

It belongs to the Hyccin family. In terms of assembly, component of a phosphatidylinositol 4-kinase (PI4K) complex, composed of PI4KA, EFR3 (EFR3A or EFR3B), TTC7 (TTC7A or TTC7B) and HYCC (HYCC1 or HYCC2).

Its subcellular location is the cytoplasm. It localises to the cytosol. The protein resides in the cell membrane. Its function is as follows. Component of a complex required to localize phosphatidylinositol 4-kinase (PI4K) to the plasma membrane. The sequence is that of Hyccin 2 (HYCC2) from Pongo abelii (Sumatran orangutan).